The primary structure comprises 334 residues: Spermidine synthase 1 (334 aa).

Residues 1-16 show a composition bias toward basic and acidic residues; it reads MDAKETSATDLKRPRE. The interval 1-35 is disordered; that stretch reads MDAKETSATDLKRPREEDDNGGAATMETENGDQKK. The PABS domain occupies 45–282; the sequence is PGWFSEMSPM…GVIGFMLCST (238 aa). Glutamine 76 contributes to the S-adenosyl 3-(methylsulfanyl)propylamine binding site. Residue tyrosine 106 participates in putrescine binding. S-adenosyl 3-(methylsulfanyl)propylamine-binding positions include glutamine 107, aspartate 131, glutamate 151, 182–183, and aspartate 201; that span reads DG. Aspartate 201 serves as the catalytic Proton acceptor. Putrescine-binding positions include 201 to 204 and tyrosine 270; that span reads DSSD.

Belongs to the spermidine/spermine synthase family. In terms of assembly, homotetramer and heterodimer. Component of a multiprotein complex. Interacts with SPMS and SPDSYN2.

The enzyme catalyses S-adenosyl 3-(methylsulfanyl)propylamine + putrescine = S-methyl-5'-thioadenosine + spermidine + H(+). The protein operates within amine and polyamine biosynthesis; spermidine biosynthesis; spermidine from putrescine: step 1/1. The chain is Spermidine synthase 1 (SPDSYN1) from Arabidopsis thaliana (Mouse-ear cress).